The chain runs to 428 residues: Cytochrome c biogenesis protein CcsB (428 aa).

The next 3 helical transmembrane spans lie at 14-34 (LRFA…GTFI), 72-92 (SIWF…CSFR), and 162-182 (IGPL…AYGS).

Belongs to the Ccs1/CcsB family. In terms of assembly, may interact with CcsA.

It is found in the cellular thylakoid membrane. In terms of biological role, required during biogenesis of c-type cytochromes (cytochrome c6 and cytochrome f) at the step of heme attachment. The polypeptide is Cytochrome c biogenesis protein CcsB (Prochlorococcus marinus (strain MIT 9312)).